The sequence spans 161 residues: 2-C-methyl-D-erythritol 2,4-cyclodiphosphate synthase (161 aa).

Residues Asp11 and His13 each coordinate a divalent metal cation. 4-CDP-2-C-methyl-D-erythritol 2-phosphate-binding positions include 11–13 (DIH) and 37–38 (HS). His45 contributes to the a divalent metal cation binding site. 4-CDP-2-C-methyl-D-erythritol 2-phosphate contacts are provided by residues 59–61 (DIG) and 135–138 (TTNE).

Belongs to the IspF family. Homotrimer. A divalent metal cation is required as a cofactor.

It catalyses the reaction 4-CDP-2-C-methyl-D-erythritol 2-phosphate = 2-C-methyl-D-erythritol 2,4-cyclic diphosphate + CMP. It participates in isoprenoid biosynthesis; isopentenyl diphosphate biosynthesis via DXP pathway; isopentenyl diphosphate from 1-deoxy-D-xylulose 5-phosphate: step 4/6. Its function is as follows. Involved in the biosynthesis of isopentenyl diphosphate (IPP) and dimethylallyl diphosphate (DMAPP), two major building blocks of isoprenoid compounds. Catalyzes the conversion of 4-diphosphocytidyl-2-C-methyl-D-erythritol 2-phosphate (CDP-ME2P) to 2-C-methyl-D-erythritol 2,4-cyclodiphosphate (ME-CPP) with a corresponding release of cytidine 5-monophosphate (CMP). The polypeptide is 2-C-methyl-D-erythritol 2,4-cyclodiphosphate synthase (Acaryochloris marina (strain MBIC 11017)).